We begin with the raw amino-acid sequence, 1393 residues long: DNA-directed RNA polymerase subunit beta' (1393 aa).

Zn(2+) contacts are provided by C72, C74, C87, and C90. Mg(2+) contacts are provided by D463, D465, and D467. C812, C887, C894, and C897 together coordinate Zn(2+).

Belongs to the RNA polymerase beta' chain family. In terms of assembly, the RNAP catalytic core consists of 2 alpha, 1 beta, 1 beta' and 1 omega subunit. When a sigma factor is associated with the core the holoenzyme is formed, which can initiate transcription. It depends on Mg(2+) as a cofactor. Requires Zn(2+) as cofactor.

The catalysed reaction is RNA(n) + a ribonucleoside 5'-triphosphate = RNA(n+1) + diphosphate. Functionally, DNA-dependent RNA polymerase catalyzes the transcription of DNA into RNA using the four ribonucleoside triphosphates as substrates. The sequence is that of DNA-directed RNA polymerase subunit beta' from Chlamydia felis (strain Fe/C-56) (Chlamydophila felis).